Reading from the N-terminus, the 209-residue chain is Uracil phosphoribosyltransferase (209 aa).

5-phospho-alpha-D-ribose 1-diphosphate contacts are provided by residues Arg79, Arg104, and 131-139; that span reads DPMLATGGS. Uracil contacts are provided by residues Ile194 and 199–201; that span reads GDA. Asp200 provides a ligand contact to 5-phospho-alpha-D-ribose 1-diphosphate.

The protein belongs to the UPRTase family. The cofactor is Mg(2+).

The catalysed reaction is UMP + diphosphate = 5-phospho-alpha-D-ribose 1-diphosphate + uracil. The protein operates within pyrimidine metabolism; UMP biosynthesis via salvage pathway; UMP from uracil: step 1/1. With respect to regulation, allosterically activated by GTP. Its function is as follows. Catalyzes the conversion of uracil and 5-phospho-alpha-D-ribose 1-diphosphate (PRPP) to UMP and diphosphate. This is Uracil phosphoribosyltransferase from Finegoldia magna (strain ATCC 29328 / DSM 20472 / WAL 2508) (Peptostreptococcus magnus).